Consider the following 230-residue polypeptide: Large ribosomal subunit protein uL1 (230 aa).

This sequence belongs to the universal ribosomal protein uL1 family. In terms of assembly, part of the 50S ribosomal subunit.

In terms of biological role, binds directly to 23S rRNA. The L1 stalk is quite mobile in the ribosome, and is involved in E site tRNA release. Protein L1 is also a translational repressor protein, it controls the translation of the L11 operon by binding to its mRNA. The protein is Large ribosomal subunit protein uL1 of Desulfitobacterium hafniense (strain DSM 10664 / DCB-2).